The following is a 463-amino-acid chain: Bifunctional protein HldE (463 aa).

The tract at residues 1–311 (MKKILVVGDL…EEIALILNQT (311 aa)) is ribokinase. ATP is bound at residue 191 to 194 (NRFE). D260 is an active-site residue. A cytidylyltransferase region spans residues 334-463 (FTNGCFDLLH…IEKIKRTCND (130 aa)).

It in the N-terminal section; belongs to the carbohydrate kinase PfkB family. The protein in the C-terminal section; belongs to the cytidylyltransferase family. Homodimer.

It catalyses the reaction D-glycero-beta-D-manno-heptose 7-phosphate + ATP = D-glycero-beta-D-manno-heptose 1,7-bisphosphate + ADP + H(+). The catalysed reaction is D-glycero-beta-D-manno-heptose 1-phosphate + ATP + H(+) = ADP-D-glycero-beta-D-manno-heptose + diphosphate. The protein operates within nucleotide-sugar biosynthesis; ADP-L-glycero-beta-D-manno-heptose biosynthesis; ADP-L-glycero-beta-D-manno-heptose from D-glycero-beta-D-manno-heptose 7-phosphate: step 1/4. Its pathway is nucleotide-sugar biosynthesis; ADP-L-glycero-beta-D-manno-heptose biosynthesis; ADP-L-glycero-beta-D-manno-heptose from D-glycero-beta-D-manno-heptose 7-phosphate: step 3/4. Catalyzes the phosphorylation of D-glycero-D-manno-heptose 7-phosphate at the C-1 position to selectively form D-glycero-beta-D-manno-heptose-1,7-bisphosphate. Its function is as follows. Catalyzes the ADP transfer from ATP to D-glycero-beta-D-manno-heptose 1-phosphate, yielding ADP-D-glycero-beta-D-manno-heptose. The protein is Bifunctional protein HldE of Helicobacter pylori (strain G27).